Here is a 199-residue protein sequence, read N- to C-terminus: Recombination protein RecR (199 aa).

Residues C58 to C73 form a C4-type zinc finger. Residues S81–P176 form the Toprim domain.

Belongs to the RecR family.

Its function is as follows. May play a role in DNA repair. It seems to be involved in an RecBC-independent recombinational process of DNA repair. It may act with RecF and RecO. In Desulfosudis oleivorans (strain DSM 6200 / JCM 39069 / Hxd3) (Desulfococcus oleovorans), this protein is Recombination protein RecR.